Reading from the N-terminus, the 163-residue chain is Bursicon (163 aa).

Positions 1 to 23 are cleaved as a signal peptide; that stretch reads MKSTFLVVLELAFFLLPGRVLYA. 5 disulfides stabilise this stretch: Cys-39-Cys-88, Cys-53-Cys-102, Cys-63-Cys-123, Cys-67-Cys-125, and Cys-85-Cys-128. Positions 39–129 constitute a CTCK domain; the sequence is CQVTPVIHVL…PLECMCRPCT (91 aa).

As to quaternary structure, heterodimer of burs and pburs.

It is found in the secreted. In terms of biological role, final heterodimeric neurohormone released at the end of the molting cycle, involved in the sclerotization (tanning) of the insect cuticle, melanization and wing spreading. The chain is Bursicon (burs124) from Anopheles gambiae (African malaria mosquito).